Reading from the N-terminus, the 110-residue chain is uncharacterized protein (110 aa).

This is an uncharacterized protein from Schizosaccharomyces pombe (strain 972 / ATCC 24843) (Fission yeast).